Reading from the N-terminus, the 305-residue chain is UDP-3-O-acyl-N-acetylglucosamine deacetylase (305 aa).

3 residues coordinate Zn(2+): His-79, His-238, and Asp-242. The active-site Proton donor is the His-265.

The protein belongs to the LpxC family. The cofactor is Zn(2+).

The enzyme catalyses a UDP-3-O-[(3R)-3-hydroxyacyl]-N-acetyl-alpha-D-glucosamine + H2O = a UDP-3-O-[(3R)-3-hydroxyacyl]-alpha-D-glucosamine + acetate. It participates in glycolipid biosynthesis; lipid IV(A) biosynthesis; lipid IV(A) from (3R)-3-hydroxytetradecanoyl-[acyl-carrier-protein] and UDP-N-acetyl-alpha-D-glucosamine: step 2/6. Catalyzes the hydrolysis of UDP-3-O-myristoyl-N-acetylglucosamine to form UDP-3-O-myristoylglucosamine and acetate, the committed step in lipid A biosynthesis. The polypeptide is UDP-3-O-acyl-N-acetylglucosamine deacetylase (Enterobacter sp. (strain 638)).